A 595-amino-acid polypeptide reads, in one-letter code: Aspartate--tRNA(Asp/Asn) ligase (595 aa).

Residue Glu-175 coordinates L-aspartate. Residues 199–202 (QQYK) are aspartate. Arg-221 and His-454 together coordinate L-aspartate. 221-223 (RDE) contributes to the ATP binding site. An ATP-binding site is contributed by Glu-488. An L-aspartate-binding site is contributed by Arg-495. An ATP-binding site is contributed by 540–543 (GIDR).

This sequence belongs to the class-II aminoacyl-tRNA synthetase family. Type 1 subfamily. As to quaternary structure, homodimer.

It localises to the cytoplasm. It catalyses the reaction tRNA(Asx) + L-aspartate + ATP = L-aspartyl-tRNA(Asx) + AMP + diphosphate. Functionally, aspartyl-tRNA synthetase with relaxed tRNA specificity since it is able to aspartylate not only its cognate tRNA(Asp) but also tRNA(Asn). Reaction proceeds in two steps: L-aspartate is first activated by ATP to form Asp-AMP and then transferred to the acceptor end of tRNA(Asp/Asn). This is Aspartate--tRNA(Asp/Asn) ligase from Brucella abortus (strain S19).